A 21-amino-acid chain; its full sequence is Chlorophyllase type 2 (21 aa).

The protein belongs to the AB hydrolase superfamily. Lipase family.

The enzyme catalyses a chlorophyll + H2O = a chlorophyllide + phytol + H(+). It participates in porphyrin-containing compound metabolism; chlorophyll degradation. Functionally, catalyzes the hydrolysis of ester bond in chlorophyll to yield chlorophyllide and phytol. The chain is Chlorophyllase type 2 from Chenopodium album (Fat hen).